The following is a 167-amino-acid chain: MPSSASEQLLRKQLKEIQKNPPQGFSVGLVDDKSIFEWEVMIIGPEDTLYEGGFFHATLSFPQDYPLMPPKMKFTTEIWHPNVHPNGEVCISILHPPGDDKYGYEDAGERWLPVHSPETILISVISMLSSPNDESPANIDAAKEFRENPQEFKKRVRRLVRRSIEMI.

The region spanning 5–165 (ASEQLLRKQL…VRRLVRRSIE (161 aa)) is the UBC core domain. Cysteine 90 functions as the Glycyl thioester intermediate in the catalytic mechanism.

It belongs to the ubiquitin-conjugating enzyme family.

It carries out the reaction S-ubiquitinyl-[E1 ubiquitin-activating enzyme]-L-cysteine + [E2 ubiquitin-conjugating enzyme]-L-cysteine = [E1 ubiquitin-activating enzyme]-L-cysteine + S-ubiquitinyl-[E2 ubiquitin-conjugating enzyme]-L-cysteine.. It participates in protein modification; protein ubiquitination. Functionally, catalyzes the covalent attachment of ubiquitin to other proteins. Has a role in the formation of chromatin structures that influence the localization of transcriptional silencing factors. This Schizosaccharomyces pombe (strain 972 / ATCC 24843) (Fission yeast) protein is Ubiquitin-conjugating enzyme E2 15 (ubc15).